Consider the following 68-residue polypeptide: MAVPKKRTSASKTRMRRSHHALAKVNVITDAKTGEYRLSHHVCMTHGTYNGRKVITDNVNTNDNNNNS.

Belongs to the bacterial ribosomal protein bL32 family.

The sequence is that of Large ribosomal subunit protein bL32 from Orientia tsutsugamushi (strain Ikeda) (Rickettsia tsutsugamushi).